The primary structure comprises 600 residues: RNA-binding protein 47 (600 aa).

A compositionally biased stretch (low complexity) spans 1–25 (MTAEDSASAVAMSNPSPSSSSKSSS). The interval 1–37 (MTAEDSASAVAMSNPSPSSSSKSSSGHPQHHCTVPEG) is disordered. RRM domains lie at 82 to 160 (CEIF…SSVD), 162 to 244 (CRLF…WAEP), and 257 to 329 (KILY…LAKP).

Belongs to the RRM RBM47 family. In terms of assembly, homodimer. May interact with MAVS; may regulate MAVS lysosomal degradation.

The protein localises to the nucleus. It is found in the cytoplasm. Functionally, single-stranded RNA-binding protein that functions in a variety of RNA processes, including alternative splicing, RNA stabilization, and RNA editing. Independently of its RNA-binding activity, could negatively regulate MAVS by promoting its lysosomal degradation. In Danio rerio (Zebrafish), this protein is RNA-binding protein 47 (rbm47).